We begin with the raw amino-acid sequence, 432 residues long: Adenosine 3'-phospho 5'-phosphosulfate transporter 1 (432 aa).

9 helical membrane-spanning segments follow: residues 5–25, 40–60, 109–129, 154–174, 238–258, 265–285, 299–319, 353–373, and 387–407; these read WWAVVVLAAFPSLGAGGETPE, VVNAAGYASFMVPGYLLVQYF, ALKLLFCATGLQVSYLTWGVL, FLVLMNRVLALIVAGLSCVLC, WEYLTATLISIGVSMFLLSSG, PATTLSGLILLAGYIAFDSFT, SVQMMFGVNFFSCLFTVGSLL, LFIFYTIGQFGAAVFTIIMTL, and GHTVTVVGGLGVAVVFAALLL. Ser-427 bears the Phosphoserine mark.

It belongs to the nucleotide-sugar transporter family. SLC35B subfamily.

It localises to the golgi apparatus membrane. It catalyses the reaction 3'-phosphoadenylyl sulfate(in) + adenosine 3',5'-bisphosphate(out) = 3'-phosphoadenylyl sulfate(out) + adenosine 3',5'-bisphosphate(in). Its function is as follows. Probably functions as a 3'-phosphoadenylyl sulfate:adenosine 3',5'-bisphosphate antiporter at the Golgi membranes. Mediates the transport from the cytosol into the lumen of the Golgi of 3'-phosphoadenylyl sulfate/adenosine 3'-phospho 5'-phosphosulfate (PAPS), a universal sulfuryl donor for sulfation events that take place in that compartment. The sequence is that of Adenosine 3'-phospho 5'-phosphosulfate transporter 1 from Pongo abelii (Sumatran orangutan).